The sequence spans 63 residues: Trypsin inhibitor 5 (63 aa).

The first 21 residues, 1 to 21 (MASVAESSGVVEVIELISDGG), serve as a signal peptide directing secretion. Residues 22–34 (NDLPRKIMSGRHG) constitute a propeptide that is removed on maturation. Cystine bridges form between C37-C54, C44-C56, and C50-C62.

This sequence belongs to the protease inhibitor I7 (squash-type serine protease inhibitor) family.

It localises to the secreted. In terms of biological role, inhibits trypsin. The protein is Trypsin inhibitor 5 of Luffa aegyptiaca (Sponge gourd).